Here is a 112-residue protein sequence, read N- to C-terminus: Small ribosomal subunit protein bS16 (112 aa).

This sequence belongs to the bacterial ribosomal protein bS16 family.

The sequence is that of Small ribosomal subunit protein bS16 from Karelsulcia muelleri (strain GWSS) (Sulcia muelleri).